The chain runs to 344 residues: Putative glycosyltransferase EpsH (344 aa).

This sequence belongs to the glycosyltransferase 2 family.

Functionally, may be involved in the production of the exopolysaccharide (EPS) component of the extracellular matrix during biofilm formation. EPS is responsible for the adhesion of chains of cells into bundles. Required for biofilm maintenance. The sequence is that of Putative glycosyltransferase EpsH (epsH) from Bacillus subtilis (strain 168).